Consider the following 378-residue polypeptide: Cobalt-precorrin-5B C(1)-methyltransferase (378 aa).

Belongs to the CbiD family.

It carries out the reaction Co-precorrin-5B + S-adenosyl-L-methionine = Co-precorrin-6A + S-adenosyl-L-homocysteine. The protein operates within cofactor biosynthesis; adenosylcobalamin biosynthesis; cob(II)yrinate a,c-diamide from sirohydrochlorin (anaerobic route): step 6/10. In terms of biological role, catalyzes the methylation of C-1 in cobalt-precorrin-5B to form cobalt-precorrin-6A. This Methanococcus aeolicus (strain ATCC BAA-1280 / DSM 17508 / OCM 812 / Nankai-3) protein is Cobalt-precorrin-5B C(1)-methyltransferase.